Here is a 500-residue protein sequence, read N- to C-terminus: Glycerol kinase (500 aa).

Thr15 contributes to the ADP binding site. Thr15, Thr16, and Ser17 together coordinate ATP. Thr15 contacts sn-glycerol 3-phosphate. Arg19 is a binding site for ADP. Sn-glycerol 3-phosphate contacts are provided by Arg85, Glu86, Tyr137, and Asp245. Positions 85, 86, 137, 245, and 246 each coordinate glycerol. ADP-binding residues include Thr267 and Gly310. The ATP site is built by Thr267, Gly310, Gln314, and Gly411. Positions 411 and 415 each coordinate ADP.

Belongs to the FGGY kinase family.

It catalyses the reaction glycerol + ATP = sn-glycerol 3-phosphate + ADP + H(+). Its pathway is polyol metabolism; glycerol degradation via glycerol kinase pathway; sn-glycerol 3-phosphate from glycerol: step 1/1. With respect to regulation, inhibited by fructose 1,6-bisphosphate (FBP). Key enzyme in the regulation of glycerol uptake and metabolism. Catalyzes the phosphorylation of glycerol to yield sn-glycerol 3-phosphate. The protein is Glycerol kinase of Aeromonas salmonicida (strain A449).